The sequence spans 73 residues: U3-agatoxin-Ao1e (73 aa).

Positions 1 to 20 (MRTIISLLLLSAMVFAVIEA) are cleaved as a signal peptide. The propeptide occupies 21–34 (ISLEEGLQLFEGER). Intrachain disulfides connect C36/C52, C43/C57, C51/C67, and C59/C65. N71 is subject to Asparagine amide.

It belongs to the neurotoxin 07 (Beta/delta-agtx) family. 03 (aga-4) subfamily. Aga sub-subfamily. Expressed by the venom gland.

It is found in the secreted. Functionally, insecticidal neurotoxin that induces an irreversible spastic paralysis when injected into insects. Modifies presynaptic voltage-gated sodium channels (Nav), causing them to open at the normal resting potential of the nerve. This leads to spontaneous release of neurotransmitter and repetitive action potentials in motor neurons. The polypeptide is U3-agatoxin-Ao1e (Agelena orientalis (Funnel-web spider)).